The following is a 938-amino-acid chain: Mediator of RNA polymerase II transcription subunit 16 (938 aa).

The protein belongs to the Mediator complex subunit 16 family. Component of the Mediator complex.

The protein resides in the nucleus. Its function is as follows. Component of the Mediator complex, a coactivator involved in the regulated transcription of nearly all RNA polymerase II-dependent genes. Mediator functions as a bridge to convey information from gene-specific regulatory proteins to the basal RNA polymerase II transcription machinery. Mediator is recruited to promoters by direct interactions with regulatory proteins and serves as a scaffold for the assembly of a functional preinitiation complex with RNA polymerase II and the general transcription factors. In Eremothecium gossypii (strain ATCC 10895 / CBS 109.51 / FGSC 9923 / NRRL Y-1056) (Yeast), this protein is Mediator of RNA polymerase II transcription subunit 16 (SIN4).